Consider the following 75-residue polypeptide: Small ribosomal subunit protein eS28 (75 aa).

The protein belongs to the eukaryotic ribosomal protein eS28 family.

This is Small ribosomal subunit protein eS28 from Methanococcus aeolicus (strain ATCC BAA-1280 / DSM 17508 / OCM 812 / Nankai-3).